The sequence spans 340 residues: Dof zinc finger protein DOF2.2 (340 aa).

The disordered stretch occupies residues P12 to E33. Residues L94–K148 form a Dof-type zinc finger. Zn(2+) is bound by residues C96, C99, C121, and C124. 2 disordered regions span residues P138–V180 and G301–M340. Residues S151 to S165 show a composition bias toward low complexity. 2 stretches are compositionally biased toward polar residues: residues T166–V180 and G309–S331.

The protein localises to the nucleus. Functionally, transcription factor that binds specifically to a 5'-AA[AG]G-3' consensus core sequence. This chain is Dof zinc finger protein DOF2.2 (DOF2.2), found in Arabidopsis thaliana (Mouse-ear cress).